Consider the following 1711-residue polypeptide: Hybrid PKS-NRPS synthetase TAS1 (1711 aa).

A condensation (C) domain region spans residues 43–397 (APLSKMQRAL…RNGLNSEHRV (355 aa)). The interval 506–907 (QQQATLRPEQ…TVLLYGRINN (402 aa)) is adenylation (A) domain. In terms of domain architecture, Carrier 1 spans 1043 to 1119 (LEWAAAKARI…SQVGLVQSRR (77 aa)). Residue Ser-1079 is modified to O-(pantetheine 4'-phosphoryl)serine. Residues 1114-1127 (LVQSRRGSSGSPRT) show a composition bias toward polar residues. Residues 1114-1159 (LVQSRRGSSGSPRTVRSHARPQRKAKTPPRQARPETPESDYDQLPD) form a disordered region. The segment covering 1128–1140 (VRSHARPQRKAKT) has biased composition (basic residues). The region spanning 1159-1236 (DLRDDVQQSI…AQVELLGRFT (78 aa)) is the Carrier 2 domain. Ser-1195 carries the O-(pantetheine 4'-phosphoryl)serine modification. One can recognise a Ketosynthase family 3 (KS3) domain in the interval 1266 to 1683 (REQYAIVGMS…GSTAHVVLSA (418 aa)). Residues Cys-1429, His-1565, and Asn-1608 each act as for beta-ketoacyl synthase activity in the active site.

This sequence in the N-terminal section; belongs to the NRP synthetase family. Requires pantetheine 4'-phosphate as cofactor.

The catalysed reaction is acetoacetyl-CoA + L-isoleucine + ATP = tenuazonic acid + AMP + diphosphate + CoA + 2 H(+). Its function is as follows. Hybrid PKS-NRPS synthetase that mediates the biosynthesis of the toxin tenuazonic acid (TeA), an inhibitor of protein biosynthesis on ribosomes by suppressing the release of new protein. TAS1 alone is sufficient for TeA synthesis via the condensation of isoleucine (Ile) with acetoacetyl-CoA by the N-terminal NRPS module and subsequent cyclization conducted by the C-terminal KS domain. The sequence is that of Hybrid PKS-NRPS synthetase TAS1 from Botryobasidium botryosum (strain FD-172 SS1).